Consider the following 237-residue polypeptide: Sugar fermentation stimulation protein homolog (237 aa).

The protein belongs to the SfsA family.

This chain is Sugar fermentation stimulation protein homolog, found in Actinobacillus pleuropneumoniae serotype 5b (strain L20).